The chain runs to 671 residues: MESIEQQLTELRTTLRHHEYLYHVMDAPEIPDAEYDRLMRELRELETKHPELITPDSPTQRVGAAPLAAFSQIRHEVPMLSLDNVFDEESFLAFNKRVQDRLKSNEKVTWCCELKLDGLAVSILYENGVLVSAATRGDGTTGEDITSNVRTIRAIPLKLHGENIPARLEVRGEVFLPQAGFEKINEDARRTGGKVFANPRNAAAGSLRQLDPRITAKRPLTFFCYGVGVLEGGELPDTHLGRLLQFKKWGLPVSDRVTLCESAEEVLAFYHKVEEDRPTLGFDIDGVVIKVNSLAQQEQLGFVARAPRWAVAFKFPAQEQMTFVRDVEFQVGRTGAITPVARLEPVHVAGVLVSNATLHNADEIERLGLRIGDKVVIRRAGDVIPQVVNVVLSERPEDTREVVFPTHCPVCGSDVERVEGEAVARCTGGLICGAQRKESLKHFVSRRAMDVDGMGDKIIDQLVEKEYVHTPADLFKLTAGKLTGLERMGPKSAQNVVNALEKAKETTFARFLYALGIREVGEATAAGLAAYFGTLEALEAASIEELQKVPDVGIVVASHVHNFFAEESNRNVISELLAEGVHWPAPVVINAEEIDSPFAGKTVVLTGSLSQMSRDDAKARLVELGAKVAGSVSKKTDLVIAGEAAGSKLAKAQELGIEVIDETEMLRLLGS.

Residues 32 to 36 (DAEYD), 81 to 82 (SL), and glutamate 113 contribute to the NAD(+) site. The N6-AMP-lysine intermediate role is filled by lysine 115. Residues arginine 136, glutamate 173, lysine 290, and lysine 314 each contribute to the NAD(+) site. Zn(2+) contacts are provided by cysteine 408, cysteine 411, cysteine 426, and cysteine 432. Residues 593–671 (EIDSPFAGKT…ETEMLRLLGS (79 aa)) enclose the BRCT domain.

The protein belongs to the NAD-dependent DNA ligase family. LigA subfamily. Requires Mg(2+) as cofactor. Mn(2+) serves as cofactor.

The catalysed reaction is NAD(+) + (deoxyribonucleotide)n-3'-hydroxyl + 5'-phospho-(deoxyribonucleotide)m = (deoxyribonucleotide)n+m + AMP + beta-nicotinamide D-nucleotide.. Its function is as follows. DNA ligase that catalyzes the formation of phosphodiester linkages between 5'-phosphoryl and 3'-hydroxyl groups in double-stranded DNA using NAD as a coenzyme and as the energy source for the reaction. It is essential for DNA replication and repair of damaged DNA. This is DNA ligase from Escherichia fergusonii (strain ATCC 35469 / DSM 13698 / CCUG 18766 / IAM 14443 / JCM 21226 / LMG 7866 / NBRC 102419 / NCTC 12128 / CDC 0568-73).